The following is a 39-amino-acid chain: Anthranilate phosphoribosyltransferase (39 aa).

It belongs to the anthranilate phosphoribosyltransferase family. Homodimer.

The enzyme catalyses N-(5-phospho-beta-D-ribosyl)anthranilate + diphosphate = 5-phospho-alpha-D-ribose 1-diphosphate + anthranilate. The protein operates within amino-acid biosynthesis; L-tryptophan biosynthesis; L-tryptophan from chorismate: step 2/5. Its function is as follows. Catalyzes the transfer of the phosphoribosyl group of 5-phosphorylribose-1-pyrophosphate (PRPP) to anthranilate to yield N-(5'-phosphoribosyl)-anthranilate (PRA). The polypeptide is Anthranilate phosphoribosyltransferase (trpD) (Pectobacterium carotovorum (Erwinia carotovora)).